The following is a 301-amino-acid chain: HTH-type transcriptional regulator MtrA (301 aa).

One can recognise an HTH araC/xylS-type domain in the interval Lys196 to Glu297. 2 consecutive DNA-binding regions (H-T-H motif) follow at residues Asp216–Val237 and Val264–Tyr287.

The affinity for the mtrCDE promoter increases 2-fold in the presence of TX-100, a known effector and substrate of the MtrCDE pump. Involved in the induction of the mtrCDE-encoded efflux pump. Binds specifically to the mtrCDE promoter region. Required for high-level inducible resistance to the detergent Triton X-100 (TX-100) and the spermicide nonoxynol-9 (N-9). The sequence is that of HTH-type transcriptional regulator MtrA from Neisseria gonorrhoeae.